A 178-amino-acid chain; its full sequence is Endothelin-2 (178 aa).

The N-terminal stretch at 1 to 24 is a signal peptide; it reads MVSVPTAWCSVALALLVALHEGKD. The propeptide occupies 25–46; that stretch reads QAAATLEQPASSPRARAAHLRL. Intrachain disulfides connect Cys49/Cys63 and Cys51/Cys59. The propeptide occupies 70–178; it reads VNTPGQTAPY…RTTHSRHRKR (109 aa). The tract at residues 96–111 is endothelin-like; it reads CECSSARDPACATFCH. A disordered region spans residues 154–178; sequence KTHFAKRQQEATREPRTTHSRHRKR. A compositionally biased stretch (basic and acidic residues) spans 160-170; that stretch reads RQQEATREPRT.

The protein belongs to the endothelin/sarafotoxin family.

The protein resides in the secreted. Endothelins are endothelium-derived vasoconstrictor peptides. In Oryctolagus cuniculus (Rabbit), this protein is Endothelin-2 (EDN2).